Reading from the N-terminus, the 655-residue chain is Sphingomyelin phosphodiesterase 3 (655 aa).

The Cytoplasmic segment spans residues 1–10 (MVLYTTPFPN). An intramembrane region (helical) is located at residues 11-31 (SCLSALHAVSWALIFPCYWLV). At 32–64 (DRLLASFIPTTYEKRQRADDPCCLQLFCTVLFT) the chain is on the cytoplasmic side. Residues Cys53, Cys54, and Cys59 are each lipidated (S-palmitoyl cysteine). Residues 65-85 (PVYLALLVAALPFAFLGFIFW) constitute an intramembrane region (helical). Over 86 to 655 (SPLQSARRPY…LMVSAGEEEA (570 aa)) the chain is Cytoplasmic. Residue Ser178 is modified to Phosphoserine. The disordered stretch occupies residues 209–318 (VEYKGDGGRH…SGGSGEPGAN (110 aa)). 2 stretches are compositionally biased toward basic and acidic residues: residues 211–221 (YKGDGGRHPSD) and 246–255 (GGEEGGRPQE). Ser289 bears the Phosphoserine mark. Residue Glu362 participates in Mg(2+) binding. Residues Cys395 and Cys396 are each lipidated (S-palmitoyl cysteine). His639 functions as the Proton acceptor in the catalytic mechanism.

It belongs to the neutral sphingomyelinase family. Requires Mg(2+) as cofactor. Palmitoylated, palmitoylation-deficient proteins are targeted for lysosomal degradation. As to expression, predominantly expressed in brain (at protein level).

The protein resides in the golgi apparatus membrane. The protein localises to the cell membrane. The catalysed reaction is a sphingomyelin + H2O = phosphocholine + an N-acylsphing-4-enine + H(+). It catalyses the reaction N-(15Z-tetracosenoyl)sphing-4-enine-1-phosphocholine + H2O = N-(15Z-tetracosenoyl)-sphing-4-enine + phosphocholine + H(+). The enzyme catalyses N-(tetracosanoyl)-sphing-4-enine-1-phosphocholine + H2O = N-tetracosanoyl-sphing-4-enine + phosphocholine + H(+). It carries out the reaction N-(hexadecanoyl)-sphing-4-enine-1-phosphocholine + H2O = N-hexadecanoylsphing-4-enine + phosphocholine + H(+). The catalysed reaction is an N-(acyl)-sphingosylphosphocholine + H2O = an N-acyl-sphingoid base + phosphocholine + H(+). It catalyses the reaction 1-hexadecanoyl-sn-glycero-3-phosphocholine + H2O = 1-hexadecanoyl-sn-glycerol + phosphocholine + H(+). The enzyme catalyses 1-O-octadecyl-sn-glycero-3-phosphocholine + H2O = 1-O-octadecyl-sn-glycerol + phosphocholine + H(+). It carries out the reaction a sphingosylphosphocholine + H2O = a sphingoid base + phosphocholine + H(+). The protein operates within lipid metabolism; sphingolipid metabolism. With respect to regulation, inhibited by nSMase inhibitor GW4869. Binding of anionic phospholipids (APLs) such as phosphatidylserine (PS) and phosphatidic acid (PA) increases enzymatic activity. Functionally, catalyzes the hydrolysis of sphingomyelin to form ceramide and phosphocholine. Ceramide mediates numerous cellular functions, such as apoptosis and growth arrest, and is capable of regulating these 2 cellular events independently. Also hydrolyzes sphingosylphosphocholine. Regulates the cell cycle by acting as a growth suppressor in confluent cells. Probably acts as a regulator of postnatal development and participates in bone and dentin mineralization. Binds to anionic phospholipids (APLs) such as phosphatidylserine (PS) and phosphatidic acid (PA) that modulate enzymatic activity and subcellular location. May be involved in IL-1-beta-induced JNK activation in hepatocytes. May act as a mediator in transcriptional regulation of NOS2/iNOS via the NF-kappa-B activation under inflammatory conditions. This chain is Sphingomyelin phosphodiesterase 3, found in Mus musculus (Mouse).